A 160-amino-acid polypeptide reads, in one-letter code: Cytochrome b6-f complex subunit 4 (160 aa).

Helical transmembrane passes span 36–56 (LLYV…ALAV), 95–115 (LLGI…PFIE), and 131–151 (AVFL…TFPI).

This sequence belongs to the cytochrome b family. PetD subfamily. The 4 large subunits of the cytochrome b6-f complex are cytochrome b6, subunit IV (17 kDa polypeptide, PetD), cytochrome f and the Rieske protein, while the 4 small subunits are PetG, PetL, PetM and PetN. The complex functions as a dimer.

The protein localises to the cellular thylakoid membrane. Its function is as follows. Component of the cytochrome b6-f complex, which mediates electron transfer between photosystem II (PSII) and photosystem I (PSI), cyclic electron flow around PSI, and state transitions. The protein is Cytochrome b6-f complex subunit 4 of Rippkaea orientalis (strain PCC 8801 / RF-1) (Cyanothece sp. (strain PCC 8801)).